A 61-amino-acid chain; its full sequence is Prophage outer membrane lipoprotein RzoR (61 aa).

Residues 1–19 form the signal peptide; sequence MRKLKMMLCVMMLPLVVVG. Cysteine 20 is lipidated: N-palmitoyl cysteine. Cysteine 20 carries S-diacylglycerol cysteine lipidation.

Belongs to the lambdalikevirus o-spanin family. In terms of assembly, homodimer; disulfide-linked. Interacts (via C-terminus) with RZ (via C-terminus). Part of the spanin complex which spans the entire periplasmic space. The spanin complex is composed of spanin, inner membrane subunit and spanin, outer membrane subunit.

It is found in the cell outer membrane. Functionally, component of the spanin complex that disrupts the outer membrane and causes cell lysis during virus exit. The spanin complex conducts the final step in cell lysis by disrupting the outer membrane after holin and endolysin action have permeabilized the inner membrane and degraded the host peptidoglycans. The chain is Prophage outer membrane lipoprotein RzoR (rzoR) from Escherichia coli (strain K12).